Here is a 265-residue protein sequence, read N- to C-terminus: Phosphatidylglycerol--prolipoprotein diacylglyceryl transferase (265 aa).

4 helical membrane-spanning segments follow: residues 10-30 (VAIALGPLKVHWYGLMYLIGI), 56-76 (LVFWVALGVIAGGRLGYVLFY), 87-107 (LILQVWRGGMSFHGGLLGVLL), and 117-137 (GKGFFELMDFIAPLVPIGLGA). Arg139 contacts a 1,2-diacyl-sn-glycero-3-phospho-(1'-sn-glycerol). Transmembrane regions (helical) follow at residues 172 to 192 (PSQLYQFALEGVALFAILWFY), 200 to 220 (MAVSGLFALCYGIFRFIVEFV), and 227 to 247 (LGYLAFGWLTMGQLLCLPMIL).

Belongs to the Lgt family.

The protein localises to the cell inner membrane. The catalysed reaction is L-cysteinyl-[prolipoprotein] + a 1,2-diacyl-sn-glycero-3-phospho-(1'-sn-glycerol) = an S-1,2-diacyl-sn-glyceryl-L-cysteinyl-[prolipoprotein] + sn-glycerol 1-phosphate + H(+). It participates in protein modification; lipoprotein biosynthesis (diacylglyceryl transfer). Its function is as follows. Catalyzes the transfer of the diacylglyceryl group from phosphatidylglycerol to the sulfhydryl group of the N-terminal cysteine of a prolipoprotein, the first step in the formation of mature lipoproteins. This is Phosphatidylglycerol--prolipoprotein diacylglyceryl transferase from Azotobacter vinelandii (strain DJ / ATCC BAA-1303).